We begin with the raw amino-acid sequence, 210 residues long: Ribulose-phosphate 3-epimerase (210 aa).

Ser9 contributes to the substrate binding site. A divalent metal cation is bound by residues His34, Asp36, and His68. The Proton acceptor role is filled by Asp36. Substrate contacts are provided by residues His68, 144-147 (GFGG), 177-179 (DGG), and 199-200 (GS). Asp177 serves as a coordination point for a divalent metal cation. The Proton donor role is filled by Asp177.

This sequence belongs to the ribulose-phosphate 3-epimerase family. Requires a divalent metal cation as cofactor.

It carries out the reaction D-ribulose 5-phosphate = D-xylulose 5-phosphate. It participates in carbohydrate degradation. Its function is as follows. Catalyzes the reversible epimerization of D-ribulose 5-phosphate to D-xylulose 5-phosphate. The polypeptide is Ribulose-phosphate 3-epimerase (Serratia marcescens).